The primary structure comprises 152 residues: Bacchus (152 aa).

The segment covering 29–41 has biased composition (basic and acidic residues); that stretch reads DLKAKAAAEDKAA. Residues 29–152 form a disordered region; the sequence is DLKAKAAAED…DDGSGSDDQA (124 aa). Low complexity predominate over residues 42–51; the sequence is AADAAGDAAD. The segment covering 72–89 has biased composition (basic and acidic residues); that stretch reads ESVKGTKRPAEAKSAESK. Positions 99–152 are enriched in acidic residues; sequence GDSDEEEALEEIIEGDSEIESDEYDIPYDGEEDDIECDDDDDDNDDGSGSDDQA.

Expressed in the brain.

It is found in the nucleus. In terms of biological role, negatively regulates tyramine beta-hydroxylase tbh and thus the conversion of tyramine (TA) to octopamine (OA). In tyrosine decarboxylase 2 (Tdc2) neurons, acts in an amine-mediated signaling pathway to negatively regulate acute ethanol sensitivity probably via tbh-mediated depletion of TA. The sequence is that of Bacchus from Drosophila melanogaster (Fruit fly).